Here is a 312-residue protein sequence, read N- to C-terminus: Porphobilinogen deaminase (312 aa).

The residue at position 241 (cysteine 241) is an S-(dipyrrolylmethanemethyl)cysteine.

Belongs to the HMBS family. In terms of assembly, monomer. Dipyrromethane is required as a cofactor.

The catalysed reaction is 4 porphobilinogen + H2O = hydroxymethylbilane + 4 NH4(+). The protein operates within porphyrin-containing compound metabolism; protoporphyrin-IX biosynthesis; coproporphyrinogen-III from 5-aminolevulinate: step 2/4. Its function is as follows. Tetrapolymerization of the monopyrrole PBG into the hydroxymethylbilane pre-uroporphyrinogen in several discrete steps. The chain is Porphobilinogen deaminase from Aliarcobacter butzleri (strain RM4018) (Arcobacter butzleri).